The following is a 113-amino-acid chain: Large ribosomal subunit protein uL22 (113 aa).

It belongs to the universal ribosomal protein uL22 family. Part of the 50S ribosomal subunit.

This protein binds specifically to 23S rRNA; its binding is stimulated by other ribosomal proteins, e.g. L4, L17, and L20. It is important during the early stages of 50S assembly. It makes multiple contacts with different domains of the 23S rRNA in the assembled 50S subunit and ribosome. Its function is as follows. The globular domain of the protein is located near the polypeptide exit tunnel on the outside of the subunit, while an extended beta-hairpin is found that lines the wall of the exit tunnel in the center of the 70S ribosome. This is Large ribosomal subunit protein uL22 from Trichlorobacter lovleyi (strain ATCC BAA-1151 / DSM 17278 / SZ) (Geobacter lovleyi).